We begin with the raw amino-acid sequence, 281 residues long: Pantothenate synthetase (281 aa).

ATP is bound at residue 30 to 37 (MGYYHAGH). H37 serves as the catalytic Proton donor. Q61 lines the (R)-pantoate pocket. Residue Q61 participates in beta-alanine binding. 147–150 (GEKD) lines the ATP pocket. Q153 is a (R)-pantoate binding site. Residues V176 and 184–187 (MSSR) contribute to the ATP site.

The protein belongs to the pantothenate synthetase family. As to quaternary structure, homodimer.

It localises to the cytoplasm. It catalyses the reaction (R)-pantoate + beta-alanine + ATP = (R)-pantothenate + AMP + diphosphate + H(+). Its pathway is cofactor biosynthesis; (R)-pantothenate biosynthesis; (R)-pantothenate from (R)-pantoate and beta-alanine: step 1/1. In terms of biological role, catalyzes the condensation of pantoate with beta-alanine in an ATP-dependent reaction via a pantoyl-adenylate intermediate. The chain is Pantothenate synthetase from Oleidesulfovibrio alaskensis (strain ATCC BAA-1058 / DSM 17464 / G20) (Desulfovibrio alaskensis).